We begin with the raw amino-acid sequence, 423 residues long: Zinc-type alcohol dehydrogenase-like protein C1198.01 (423 aa).

The tract at residues K14–T36 is disordered. 6 residues coordinate Zn(2+): C74, H97, C127, C130, C133, and C141.

It belongs to the zinc-containing alcohol dehydrogenase family. Class-III subfamily. Zn(2+) serves as cofactor.

Its subcellular location is the golgi apparatus. This is Zinc-type alcohol dehydrogenase-like protein C1198.01 from Schizosaccharomyces pombe (strain 972 / ATCC 24843) (Fission yeast).